Reading from the N-terminus, the 128-residue chain is Large ribosomal subunit protein bL12 (128 aa).

Belongs to the bacterial ribosomal protein bL12 family. Homodimer. Part of the ribosomal stalk of the 50S ribosomal subunit. Forms a multimeric L10(L12)X complex, where L10 forms an elongated spine to which 2 to 4 L12 dimers bind in a sequential fashion. Binds GTP-bound translation factors.

Functionally, forms part of the ribosomal stalk which helps the ribosome interact with GTP-bound translation factors. Is thus essential for accurate translation. The chain is Large ribosomal subunit protein bL12 from Sorangium cellulosum (strain So ce56) (Polyangium cellulosum (strain So ce56)).